The chain runs to 128 residues: Glycine cleavage system H protein (128 aa).

Residues 24–105 (SLTIGVTDHA…AYAAWLFKLK (82 aa)) enclose the Lipoyl-binding domain. At K65 the chain carries N6-lipoyllysine.

It belongs to the GcvH family. The glycine cleavage system is composed of four proteins: P, T, L and H. Requires (R)-lipoate as cofactor.

Its function is as follows. The glycine cleavage system catalyzes the degradation of glycine. The H protein shuttles the methylamine group of glycine from the P protein to the T protein. This chain is Glycine cleavage system H protein, found in Aromatoleum aromaticum (strain DSM 19018 / LMG 30748 / EbN1) (Azoarcus sp. (strain EbN1)).